The chain runs to 687 residues: Glycine--tRNA ligase beta subunit (687 aa).

Belongs to the class-II aminoacyl-tRNA synthetase family. As to quaternary structure, tetramer of two alpha and two beta subunits.

The protein localises to the cytoplasm. It catalyses the reaction tRNA(Gly) + glycine + ATP = glycyl-tRNA(Gly) + AMP + diphosphate. This Geobacter sulfurreducens (strain ATCC 51573 / DSM 12127 / PCA) protein is Glycine--tRNA ligase beta subunit.